Here is a 202-residue protein sequence, read N- to C-terminus: Holliday junction resolvase RecU (202 aa).

Mg(2+) contacts are provided by Thr-85, Asp-87, Glu-100, and Gln-119.

It belongs to the RecU family. Mg(2+) serves as cofactor.

The protein resides in the cytoplasm. The enzyme catalyses Endonucleolytic cleavage at a junction such as a reciprocal single-stranded crossover between two homologous DNA duplexes (Holliday junction).. In terms of biological role, endonuclease that resolves Holliday junction intermediates in genetic recombination. Cleaves mobile four-strand junctions by introducing symmetrical nicks in paired strands. Promotes annealing of linear ssDNA with homologous dsDNA. Required for DNA repair, homologous recombination and chromosome segregation. This Streptococcus equi subsp. zooepidemicus (strain H70) protein is Holliday junction resolvase RecU.